Here is a 692-residue protein sequence, read N- to C-terminus: Methionine--tRNA ligase (692 aa).

Residues 26 to 36 carry the 'HIGH' region motif; sequence PYANGSIHLGH. Cys-157, Cys-160, Cys-170, and Cys-173 together coordinate Zn(2+). The short motif at 342-346 is the 'KMSKS' region element; it reads KMSKS. Lys-345 contacts ATP. Residues 590–692 enclose the tRNA-binding domain; that stretch reads DFAKVDLRIA…SGAQPGMRVK (103 aa).

It belongs to the class-I aminoacyl-tRNA synthetase family. MetG type 1 subfamily. In terms of assembly, homodimer. Zn(2+) is required as a cofactor.

Its subcellular location is the cytoplasm. The enzyme catalyses tRNA(Met) + L-methionine + ATP = L-methionyl-tRNA(Met) + AMP + diphosphate. Its function is as follows. Is required not only for elongation of protein synthesis but also for the initiation of all mRNA translation through initiator tRNA(fMet) aminoacylation. The chain is Methionine--tRNA ligase from Methylobacillus flagellatus (strain ATCC 51484 / DSM 6875 / VKM B-1610 / KT).